The chain runs to 3996 residues: Probable E3 ubiquitin-protein ligase HECTD4 (3996 aa).

A helical membrane pass occupies residues 282–302 (TCIIRCILVVFQVVFKFFFSP). Positions 1494-1510 (PTASEPDTTLTKTSPKN) are enriched in polar residues. Disordered stretches follow at residues 1494 to 1524 (PTASEPDTTLTKTSPKNSLKGDKDPGEESEA) and 1616 to 1637 (PETVSGLSTGDKKKTAQTSICR). Position 2080 is a phosphothreonine (threonine 2080). Disordered stretches follow at residues 2219–2245 (FITSGPDPHPPPIADDESDDDDDDDIP), 2859–2919 (TSAT…PTVL), 3017–3053 (EDTKKPKDKAEGGDGKVEPEKTLAFPGTDSMEVSTSS), and 3327–3403 (FDKS…QEVP). The span at 2232–2245 (ADDESDDDDDDDIP) shows a compositional bias: acidic residues. Low complexity predominate over residues 2866–2887 (LSDSSSSSSSSPGQTPQSPSLL). Basic residues predominate over residues 2888–2897 (SKRKKVKMKR). Composition is skewed to basic and acidic residues over residues 3017-3037 (EDTKKPKDKAEGGDGKVEPEK), 3327-3341 (FDKSKYSKAGKEQHP), and 3370-3403 (LSEKKPTVKPKSPEKSKPDEKDPEKSPTKKQEVP). An HECT domain is found at 3627–3996 (SGGDPTYAFN…IHYREDPLSG (370 aa)). Cysteine 3964 functions as the Glycyl thioester intermediate in the catalytic mechanism.

The protein resides in the membrane. The catalysed reaction is S-ubiquitinyl-[E2 ubiquitin-conjugating enzyme]-L-cysteine + [acceptor protein]-L-lysine = [E2 ubiquitin-conjugating enzyme]-L-cysteine + N(6)-ubiquitinyl-[acceptor protein]-L-lysine.. It participates in protein modification; protein ubiquitination. E3 ubiquitin-protein ligase which accepts ubiquitin from an E2 ubiquitin-conjugating enzyme in the form of a thioester and then directly transfers the ubiquitin to targeted substrates. The sequence is that of Probable E3 ubiquitin-protein ligase HECTD4 (HECTD4) from Homo sapiens (Human).